A 200-amino-acid chain; its full sequence is NAD(P)H dehydrogenase (quinone) (200 aa).

A Flavodoxin-like domain is found at 4-191 (ILVLYHSLWG…TIARFQGRHV (188 aa)). FMN is bound by residues 10–15 (SLWGHV) and 79–81 (TRF). Tryptophan 12 serves as a coordination point for NAD(+). Tryptophan 99 is a binding site for substrate. FMN is bound by residues 114-120 (STATQHG) and histidine 135.

The protein belongs to the WrbA family. It depends on FMN as a cofactor.

It carries out the reaction a quinone + NADH + H(+) = a quinol + NAD(+). The enzyme catalyses a quinone + NADPH + H(+) = a quinol + NADP(+). The protein is NAD(P)H dehydrogenase (quinone) of Acidithiobacillus ferrooxidans (strain ATCC 53993 / BNL-5-31) (Leptospirillum ferrooxidans (ATCC 53993)).